The chain runs to 615 residues: uncharacterized protein (615 aa).

3 stretches are compositionally biased toward polar residues: residues 1–11 (MSETSSNSPAS), 41–55 (LSQNAQGASKSSSKV), and 128–140 (TSGSSTGLSNAPP). 2 disordered regions span residues 1–61 (MSET…QALV) and 97–149 (HQNH…KASS). Phosphoserine occurs at positions 149 and 152. A disordered region spans residues 181–217 (LIHPEQTDRGLPYAPDEKFHNSGSLKLPKGASLEDLS). Phosphoserine is present on residues S219 and S275. Disordered regions lie at residues 266 to 481 (KPLA…KFTG), 493 to 565 (RLQK…KPSF), and 586 to 615 (GVETRKEVEPKEEAVIPEEDVEVEVETEEQ). Residues 272 to 283 (RQRSTADLTESD) show a composition bias toward polar residues. Phosphothreonine occurs at positions 276 and 297. The span at 312–323 (EAEKGFYTKDGE) shows a compositional bias: basic and acidic residues. The segment covering 356 to 376 (PSLSSASQPSAASSSSSSEPS) has biased composition (low complexity). Over residues 505-522 (PNKSKSPSGTKSPASGET) the composition is skewed to polar residues. T514 is subject to Phosphothreonine. At S516 the chain carries Phosphoserine. A compositionally biased stretch (basic and acidic residues) spans 586 to 599 (GVETRKEVEPKEEA). Over residues 600–615 (VIPEEDVEVEVETEEQ) the composition is skewed to acidic residues.

This is an uncharacterized protein from Schizosaccharomyces pombe (strain 972 / ATCC 24843) (Fission yeast).